The primary structure comprises 326 residues: Lipopolysaccharide heptosyltransferase 1 (326 aa).

ADP contacts are provided by threonine 187, threonine 188, lysine 192, glutamate 222, and methionine 242. ADP-L-glycero-beta-D-manno-heptose contacts are provided by threonine 187, threonine 188, lysine 192, glutamate 222, methionine 242, aspartate 261, threonine 262, glycine 263, and histidine 266. ADP contacts are provided by threonine 262 and glycine 263.

The protein belongs to the glycosyltransferase 9 family. Monomer.

Its subcellular location is the cell inner membrane. The catalysed reaction is an alpha-Kdo-(2-&gt;4)-alpha-Kdo-(2-&gt;6)-lipid A + ADP-L-glycero-beta-D-manno-heptose = an L-alpha-D-Hep-(1-&gt;5)-[alpha-Kdo-(2-&gt;4)]-alpha-Kdo-(2-&gt;6)-lipid A + ADP + H(+). It carries out the reaction alpha-Kdo-(2-&gt;4)-alpha-Kdo-(2-&gt;6)-lipid A (E. coli) + ADP-L-glycero-beta-D-manno-heptose = L-alpha-D-Hep-(1-&gt;5)-[alpha-Kdo-(2-&gt;4)]-alpha-Kdo-(2-&gt;6)-lipid A (E. coli) + ADP + H(+). Its pathway is bacterial outer membrane biogenesis; LPS core biosynthesis. Inhibited by ADP-L-glycero-beta-D-gluco-2-deoxy-2-fluoro-heptose (ADP-2F-heptose), a non-cleavable analog of the substrate ADP-L-glycero-beta-D-manno-heptose. Glycosyltransferase involved in the biosynthesis of the core oligosaccharide region of lipopolysaccharide (LPS). Catalyzes the addition of the first heptose unit to one 3-deoxy-D-manno-octulosonic acid (Kdo) residue of the Kdo2-lipid A module. The sequence is that of Lipopolysaccharide heptosyltransferase 1 from Escherichia coli O18:K1:H7 (strain RS218 / NMEC).